Reading from the N-terminus, the 227-residue chain is Ribosomal RNA small subunit methyltransferase G (227 aa).

Residues glycine 69, phenylalanine 74, 119-120, and arginine 134 contribute to the S-adenosyl-L-methionine site; that span reads VE.

This sequence belongs to the methyltransferase superfamily. RNA methyltransferase RsmG family.

The protein resides in the cytoplasm. Its function is as follows. Specifically methylates the N7 position of a guanine in 16S rRNA. The sequence is that of Ribosomal RNA small subunit methyltransferase G from Mycoplasmopsis pulmonis (strain UAB CTIP) (Mycoplasma pulmonis).